The primary structure comprises 247 residues: Putative urease accessory protein UreD homolog (247 aa).

The protein belongs to the UreD family. As to quaternary structure, ureD, UreF and UreG form a complex that acts as a GTP-hydrolysis-dependent molecular chaperone, activating the urease apoprotein by helping to assemble the nickel containing metallocenter of UreC. The UreE protein probably delivers the nickel.

Its subcellular location is the cytoplasm. Functionally, required for maturation of urease via the functional incorporation of the urease nickel metallocenter. The protein is Putative urease accessory protein UreD homolog of Escherichia coli O157:H7.